The primary structure comprises 192 residues: MSAIDCIITAAGLSSRMGQWKMMLPWEQGTILDTSIKNALQFCSRIILVTGYRGNELHERYANQSNITIIHNPDYAQGLLTSVKAAVPAVQTEHCFLTHGDMPTLTIDIFRKIWSLRNDGAILPLHNGIPGHPILVSKPCLMQAIQRPNVTNMRQALLMGDHYSVEIENAEIILDIDTPDDFITAKERYTEI.

A Mg(2+)-binding site is contributed by aspartate 101.

As to quaternary structure, monomer. Interacts with the Moco-binding chaperone PaoD. Mg(2+) is required as a cofactor. Mn(2+) serves as cofactor.

It carries out the reaction Mo-molybdopterin + CTP + H(+) = Mo-molybdopterin cytosine dinucleotide + diphosphate. Functionally, transfers a CMP moiety from CTP to Mo-molybdopterin (Mo-MPT) cofactor (Moco or molybdenum cofactor) to form Mo-molybdopterin cytosine dinucleotide (Mo-MCD) cofactor. Is specific for CTP; other nucleotides such as ATP and GTP cannot be utilized. Is also able to convert MPT to MCD in the absence of molybdate, however, with only one catalytic turnover. The sequence is that of Molybdenum cofactor cytidylyltransferase (mocA) from Escherichia coli (strain K12).